Consider the following 297-residue polypeptide: Protoheme IX farnesyltransferase (297 aa).

9 helical membrane passes run 12–32 (PGII…AAKG), 36–56 (YALF…GCVF), 85–105 (VSLV…YLAA), 108–128 (LAMW…SLYM), 133–153 (VYGT…GYCA), 163–183 (LILL…IAIF), 209–229 (ITLY…SGYA), 230–250 (GYKY…MALQ), and 266–286 (FIFS…DFMV).

Belongs to the UbiA prenyltransferase family. Protoheme IX farnesyltransferase subfamily.

It localises to the cell inner membrane. It catalyses the reaction heme b + (2E,6E)-farnesyl diphosphate + H2O = Fe(II)-heme o + diphosphate. It participates in porphyrin-containing compound metabolism; heme O biosynthesis; heme O from protoheme: step 1/1. Functionally, converts heme B (protoheme IX) to heme O by substitution of the vinyl group on carbon 2 of heme B porphyrin ring with a hydroxyethyl farnesyl side group. This Sodalis glossinidius (strain morsitans) protein is Protoheme IX farnesyltransferase.